Here is a 374-residue protein sequence, read N- to C-terminus: MPLLTTPYAELDLIRQPEQANDPLQAFDAADEYLLAQLHDQAPDANCRVLVLNDSFGALAASLAGQLQVVSSGDSHLGHLALEKNLARNGLPFDSVPFVPASEHWQGPFDRVLVRVPKTLALLEEQLIRLQGQLAPGAQVIAGAMIKHLPRAAGDLMEKYIGPVQASLALKKARLLTATVAERPLAKSPYPSCYRLDAPALDLVNHANVFCREGLDIGTRAFLPHLPRNLGRARVADLGCGNGVLAIASALANPEAEYTLVDESYMAVQSAQENWLAALGERPATFLAADGLAGLEKQSLDVVLCNPPFHQQQVVGDFLAWRMFQQAREALVVGGALYIVGNRHLGYHSKLARLFRGVEQVAATPKFVILKARK.

Belongs to the methyltransferase superfamily. RlmG family.

It is found in the cytoplasm. It catalyses the reaction guanosine(1835) in 23S rRNA + S-adenosyl-L-methionine = N(2)-methylguanosine(1835) in 23S rRNA + S-adenosyl-L-homocysteine + H(+). In terms of biological role, specifically methylates the guanine in position 1835 (m2G1835) of 23S rRNA. In Pseudomonas putida (strain ATCC 47054 / DSM 6125 / CFBP 8728 / NCIMB 11950 / KT2440), this protein is Ribosomal RNA large subunit methyltransferase G.